Here is a 273-residue protein sequence, read N- to C-terminus: 4-hydroxy-tetrahydrodipicolinate reductase (273 aa).

NAD(+) is bound by residues 12–17 and glutamate 38; that span reads GAGGRM. NADP(+) is bound at residue arginine 39. NAD(+) contacts are provided by residues 102–104 and 126–129; these read GTT and AANF. Histidine 159 serves as the catalytic Proton donor/acceptor. Histidine 160 contributes to the (S)-2,3,4,5-tetrahydrodipicolinate binding site. Lysine 163 functions as the Proton donor in the catalytic mechanism. 169-170 is a (S)-2,3,4,5-tetrahydrodipicolinate binding site; that stretch reads GT.

The protein belongs to the DapB family. In terms of assembly, homotetramer.

It localises to the cytoplasm. The catalysed reaction is (S)-2,3,4,5-tetrahydrodipicolinate + NAD(+) + H2O = (2S,4S)-4-hydroxy-2,3,4,5-tetrahydrodipicolinate + NADH + H(+). The enzyme catalyses (S)-2,3,4,5-tetrahydrodipicolinate + NADP(+) + H2O = (2S,4S)-4-hydroxy-2,3,4,5-tetrahydrodipicolinate + NADPH + H(+). It functions in the pathway amino-acid biosynthesis; L-lysine biosynthesis via DAP pathway; (S)-tetrahydrodipicolinate from L-aspartate: step 4/4. Catalyzes the conversion of 4-hydroxy-tetrahydrodipicolinate (HTPA) to tetrahydrodipicolinate. The polypeptide is 4-hydroxy-tetrahydrodipicolinate reductase (Yersinia pestis bv. Antiqua (strain Antiqua)).